The sequence spans 312 residues: Malate dehydrogenase (312 aa).

Residues 7–13 (GAAGGIG) and D34 contribute to the NAD(+) site. Residues R81 and R87 each coordinate substrate. NAD(+)-binding positions include N94 and 117-119 (ITN). Positions 119 and 153 each coordinate substrate. H177 serves as the catalytic Proton acceptor. An NAD(+)-binding site is contributed by M227.

The protein belongs to the LDH/MDH superfamily. MDH type 1 family. As to quaternary structure, homodimer.

The catalysed reaction is (S)-malate + NAD(+) = oxaloacetate + NADH + H(+). Functionally, catalyzes the reversible oxidation of malate to oxaloacetate. The chain is Malate dehydrogenase from Serratia proteamaculans (strain 568).